Here is a 405-residue protein sequence, read N- to C-terminus: Phosphoglycerate kinase (405 aa).

Residues 24 to 26 (DFN), arginine 40, 63 to 66 (HLGR), arginine 122, and arginine 162 each bind substrate. Residues lysine 212, glutamate 331, and 361-364 (GGDS) contribute to the ATP site.

This sequence belongs to the phosphoglycerate kinase family. In terms of assembly, monomer.

Its subcellular location is the cytoplasm. It catalyses the reaction (2R)-3-phosphoglycerate + ATP = (2R)-3-phospho-glyceroyl phosphate + ADP. It participates in carbohydrate degradation; glycolysis; pyruvate from D-glyceraldehyde 3-phosphate: step 2/5. The protein is Phosphoglycerate kinase (pgk) of Corynebacterium glutamicum (strain ATCC 13032 / DSM 20300 / JCM 1318 / BCRC 11384 / CCUG 27702 / LMG 3730 / NBRC 12168 / NCIMB 10025 / NRRL B-2784 / 534).